A 380-amino-acid polypeptide reads, in one-letter code: Probable protein phosphatase 2C 2 (380 aa).

Residues 69–339 form the PPM-type phosphatase domain; that stretch reads RSGSFADIGP…DNLTVIVICF (271 aa). Residues aspartate 113, glycine 114, aspartate 287, and aspartate 330 each coordinate Mn(2+).

Belongs to the PP2C family. Requires Mg(2+) as cofactor. Mn(2+) is required as a cofactor.

The catalysed reaction is O-phospho-L-seryl-[protein] + H2O = L-seryl-[protein] + phosphate. It catalyses the reaction O-phospho-L-threonyl-[protein] + H2O = L-threonyl-[protein] + phosphate. The protein is Probable protein phosphatase 2C 2 of Oryza sativa subsp. japonica (Rice).